The sequence spans 133 residues: Ribosome-binding factor A (133 aa).

Belongs to the RbfA family. As to quaternary structure, monomer. Binds 30S ribosomal subunits, but not 50S ribosomal subunits or 70S ribosomes.

It localises to the cytoplasm. One of several proteins that assist in the late maturation steps of the functional core of the 30S ribosomal subunit. Associates with free 30S ribosomal subunits (but not with 30S subunits that are part of 70S ribosomes or polysomes). Required for efficient processing of 16S rRNA. May interact with the 5'-terminal helix region of 16S rRNA. This chain is Ribosome-binding factor A, found in Chlamydia muridarum (strain MoPn / Nigg).